Here is a 403-residue protein sequence, read N- to C-terminus: Phosphoglycerate kinase (403 aa).

Substrate is bound by residues 24–26 (DLN), arginine 39, 62–65 (HLGR), arginine 121, and arginine 161. Residues lysine 211, glycine 299, glutamate 330, and 359-362 (GGDS) each bind ATP.

This sequence belongs to the phosphoglycerate kinase family. In terms of assembly, monomer.

The protein resides in the cytoplasm. The catalysed reaction is (2R)-3-phosphoglycerate + ATP = (2R)-3-phospho-glyceroyl phosphate + ADP. Its pathway is carbohydrate degradation; glycolysis; pyruvate from D-glyceraldehyde 3-phosphate: step 2/5. This chain is Phosphoglycerate kinase, found in Rhodococcus jostii (strain RHA1).